A 1369-amino-acid chain; its full sequence is Phospholipase D1 (1369 aa).

Disordered stretches follow at residues 27–90 (YSEK…SSWH) and 318–340 (ESHSQDGDRTTGQPRHANNGRKK). Positions 31–53 (GTGRKDAEDHTPSKITDLEKNVD) are enriched in basic and acidic residues. A PX domain is found at 208-379 (TDLIKVSVLD…NVLYSFLEFS (172 aa)). 2 consecutive PLD phosphodiesterase domains span residues 641–668 (LFWAHHEKLVVVDDAITFIGGIDLCFGR) and 941–968 (EMIYVHAKILIADDRVAVIGSANINERS). Residues 1277–1289 (HETHEKSENDPKN) show a composition bias toward basic and acidic residues. Residues 1277 to 1320 (HETHEKSENDPKNPKAGSQGSGNTSASEDSKTEKPKTRTNNGLQ) are disordered. Polar residues predominate over residues 1292–1303 (AGSQGSGNTSAS).

It belongs to the phospholipase D family.

The protein resides in the cytoplasm. It carries out the reaction a 1,2-diacyl-sn-glycero-3-phosphocholine + H2O = a 1,2-diacyl-sn-glycero-3-phosphate + choline + H(+). Its activity is regulated as follows. Activity is slightly stimulated by oleate. Its function is as follows. Required for meiosis and spore formation. Seems to be involved in the coordinate induction of late meiotic events. This is Phospholipase D1 (pld1) from Schizosaccharomyces pombe (strain 972 / ATCC 24843) (Fission yeast).